Consider the following 603-residue polypeptide: Phosphoribosylformylglycinamidine synthase subunit PurL (603 aa).

The active site involves histidine 32. 2 residues coordinate ATP: tyrosine 35 and lysine 68. Glutamate 70 provides a ligand contact to Mg(2+). Substrate contacts are provided by residues 71–74 (SHNH) and arginine 93. The Proton acceptor role is filled by histidine 72. Position 94 (aspartate 94) interacts with Mg(2+). ATP-binding positions include aspartate 107 and 136–139 (GELR). Residues glycine 189 and glutamine 208 each contribute to the substrate site. A Mg(2+)-binding site is contributed by aspartate 236. Position 280 to 282 (280 to 282 (ESQ)) interacts with substrate. ATP-binding residues include glycine 388, lysine 429, asparagine 442, and glycine 477. Asparagine 478 contacts Mg(2+). Position 480 (serine 480) interacts with substrate. 2 residues coordinate ATP: serine 549 and histidine 556.

The protein belongs to the FGAMS family. Monomer. Part of the FGAM synthase complex composed of 1 PurL, 1 PurQ and 2 PurS subunits.

It is found in the cytoplasm. It carries out the reaction N(2)-formyl-N(1)-(5-phospho-beta-D-ribosyl)glycinamide + L-glutamine + ATP + H2O = 2-formamido-N(1)-(5-O-phospho-beta-D-ribosyl)acetamidine + L-glutamate + ADP + phosphate + H(+). The protein operates within purine metabolism; IMP biosynthesis via de novo pathway; 5-amino-1-(5-phospho-D-ribosyl)imidazole from N(2)-formyl-N(1)-(5-phospho-D-ribosyl)glycinamide: step 1/2. Its function is as follows. Part of the phosphoribosylformylglycinamidine synthase complex involved in the purines biosynthetic pathway. Catalyzes the ATP-dependent conversion of formylglycinamide ribonucleotide (FGAR) and glutamine to yield formylglycinamidine ribonucleotide (FGAM) and glutamate. The FGAM synthase complex is composed of three subunits. PurQ produces an ammonia molecule by converting glutamine to glutamate. PurL transfers the ammonia molecule to FGAR to form FGAM in an ATP-dependent manner. PurS interacts with PurQ and PurL and is thought to assist in the transfer of the ammonia molecule from PurQ to PurL. This is Phosphoribosylformylglycinamidine synthase subunit PurL from Thermotoga maritima (strain ATCC 43589 / DSM 3109 / JCM 10099 / NBRC 100826 / MSB8).